Here is a 247-residue protein sequence, read N- to C-terminus: tRNA pseudouridine synthase A (247 aa).

Asp52 (nucleophile) is an active-site residue. Tyr113 contacts substrate.

The protein belongs to the tRNA pseudouridine synthase TruA family. In terms of assembly, homodimer.

The catalysed reaction is uridine(38/39/40) in tRNA = pseudouridine(38/39/40) in tRNA. Its function is as follows. Formation of pseudouridine at positions 38, 39 and 40 in the anticodon stem and loop of transfer RNAs. The sequence is that of tRNA pseudouridine synthase A from Bartonella quintana (strain Toulouse) (Rochalimaea quintana).